The following is a 106-amino-acid chain: Iron-sulfur cluster assembly protein CyaY (106 aa).

The protein belongs to the frataxin family.

Functionally, involved in iron-sulfur (Fe-S) cluster assembly. May act as a regulator of Fe-S biogenesis. The sequence is that of Iron-sulfur cluster assembly protein CyaY from Salmonella schwarzengrund (strain CVM19633).